The primary structure comprises 319 residues: Transaldolase (319 aa).

The Schiff-base intermediate with substrate role is filled by Lys-125.

It belongs to the transaldolase family. Type 1 subfamily. In terms of assembly, homodimer.

It is found in the cytoplasm. It catalyses the reaction D-sedoheptulose 7-phosphate + D-glyceraldehyde 3-phosphate = D-erythrose 4-phosphate + beta-D-fructose 6-phosphate. The protein operates within carbohydrate degradation; pentose phosphate pathway; D-glyceraldehyde 3-phosphate and beta-D-fructose 6-phosphate from D-ribose 5-phosphate and D-xylulose 5-phosphate (non-oxidative stage): step 2/3. Its function is as follows. Transaldolase is important for the balance of metabolites in the pentose-phosphate pathway. In Ralstonia nicotianae (strain ATCC BAA-1114 / GMI1000) (Ralstonia solanacearum), this protein is Transaldolase.